A 361-amino-acid chain; its full sequence is D-alanine--D-alanine ligase (361 aa).

The ATP-grasp domain maps to 149–353; that stretch reads KKLMAAEGLP…YEELLDVLVQ (205 aa). 176–231 is a binding site for ATP; sequence KKLLGLPVFVKPARGGSSIGISKVSRWEDLPAAVDLARQHDEKVIVESEIVGPEVE. Positions 308, 320, and 322 each coordinate Mg(2+).

This sequence belongs to the D-alanine--D-alanine ligase family. Mg(2+) is required as a cofactor. Mn(2+) serves as cofactor.

The protein localises to the cytoplasm. It carries out the reaction 2 D-alanine + ATP = D-alanyl-D-alanine + ADP + phosphate + H(+). It functions in the pathway cell wall biogenesis; peptidoglycan biosynthesis. Functionally, cell wall formation. The protein is D-alanine--D-alanine ligase of Corynebacterium efficiens (strain DSM 44549 / YS-314 / AJ 12310 / JCM 11189 / NBRC 100395).